Consider the following 624-residue polypeptide: LRR receptor kinase BAK1 (624 aa).

Positions 1–25 (MAAPRWAVWAVLLLRLLVPAARVLA) are cleaved as a signal peptide. The Extracellular segment spans residues 26 to 237 (NMEGDALHSL…QSPGSSSSTG (212 aa)). LRR repeat units lie at residues 91 to 115 (LKNL…LGNL), 117 to 139 (NLVS…LGNL), 140 to 163 (LKLR…LTAI), and 164 to 188 (TALQ…SFSL). 5 N-linked (GlcNAc...) asparagine glycosylation sites follow: asparagine 103, asparagine 114, asparagine 127, asparagine 149, and asparagine 175. Residues 205–236 (TTKPCPGAPPFSPPPPYNPPTPVQSPGSSSST) are disordered. The span at 210-227 (PGAPPFSPPPPYNPPTPV) shows a compositional bias: pro residues. The helical transmembrane segment at 238 to 258 (AIAGGVAAGAALLFAIPAIGF) threads the bilayer. The Cytoplasmic segment spans residues 259–624 (AWYRRRKPQE…LHAVELSGPR (366 aa)). The Protein kinase domain maps to 301-588 (FSNKNILGRG…GLAERWEEWQ (288 aa)). ATP contacts are provided by residues 307–315 (LGRGGFGKV) and lysine 329. Aspartate 428 serves as the catalytic Proton acceptor.

The protein belongs to the protein kinase superfamily. Ser/Thr protein kinase family. As to quaternary structure, forms homodimers. Interacts with BRI1. Interacts with REM4.1.

It localises to the cell membrane. It carries out the reaction L-seryl-[protein] + ATP = O-phospho-L-seryl-[protein] + ADP + H(+). It catalyses the reaction L-threonyl-[protein] + ATP = O-phospho-L-threonyl-[protein] + ADP + H(+). LRR receptor kinase involved in defense response. Does not seem to be required specifically for XA21-mediated immunity or basal resistance to Xanthomonas oryzae pv. oryzae (Xoo), or immunity to Magnaporthe oryzae. Involved in brassinosteroid (BR) signaling pathway. Acts as a coreceptor of BRI1. Forms at the plasma membrane a receptor complex with BRI1 which is activated in response to brassinolide. Phosphorylates BRI1. Required for normal plant growth and leaf development. Possesses kinase activity in vitro. In Oryza sativa subsp. indica (Rice), this protein is LRR receptor kinase BAK1.